Reading from the N-terminus, the 257-residue chain is E3 ubiquitin-protein ligase RNF170 (257 aa).

The Lumenal segment spans residues Met-1 to Asp-24. Residues Gln-25–Leu-45 traverse the membrane as a helical segment. Topologically, residues Arg-46–Arg-200 are cytoplasmic. The RING-type zinc-finger motif lies at Cys-87 to Arg-130. A helical membrane pass occupies residues Ile-201–Glu-221. Ala-222 is a topological domain (lumenal). The helical transmembrane segment at Val-223–Ile-243 threads the bilayer. Residues Ser-244–Arg-257 are Cytoplasmic-facing.

Its subcellular location is the endoplasmic reticulum membrane. The enzyme catalyses S-ubiquitinyl-[E2 ubiquitin-conjugating enzyme]-L-cysteine + [acceptor protein]-L-lysine = [E2 ubiquitin-conjugating enzyme]-L-cysteine + N(6)-ubiquitinyl-[acceptor protein]-L-lysine.. The protein operates within protein modification; protein ubiquitination. E3 ubiquitin-protein ligase that plays an essential role in stimulus-induced inositol 1,4,5-trisphosphate receptor (ITPR) ubiquitination and degradation via the endoplasmic reticulum-associated degradation (ERAD) pathway. Also involved in ITPR turnover in resting cells. The protein is E3 ubiquitin-protein ligase RNF170 (rnf170) of Xenopus tropicalis (Western clawed frog).